Consider the following 320-residue polypeptide: Homoserine kinase (320 aa).

100-110 (PLSSGMGSSAA) lines the ATP pocket.

The protein belongs to the GHMP kinase family. Homoserine kinase subfamily.

It localises to the cytoplasm. It catalyses the reaction L-homoserine + ATP = O-phospho-L-homoserine + ADP + H(+). The protein operates within amino-acid biosynthesis; L-threonine biosynthesis; L-threonine from L-aspartate: step 4/5. Catalyzes the ATP-dependent phosphorylation of L-homoserine to L-homoserine phosphate. The protein is Homoserine kinase of Chlorobium phaeobacteroides (strain BS1).